Consider the following 130-residue polypeptide: Protein ApaG (130 aa).

Residues 3–127 form the ApaG domain; the sequence is SQTTRDIEVT…FSLDSPHEKP (125 aa).

This Paramagnetospirillum magneticum (strain ATCC 700264 / AMB-1) (Magnetospirillum magneticum) protein is Protein ApaG.